A 426-amino-acid chain; its full sequence is 3-phosphoshikimate 1-carboxyvinyltransferase (426 aa).

Residues Lys20, Ser21, and Arg25 each contribute to the 3-phosphoshikimate site. A phosphoenolpyruvate-binding site is contributed by Lys20. Phosphoenolpyruvate contacts are provided by Gly92 and Arg120. Ser166, Gln168, Asp312, and Lys339 together coordinate 3-phosphoshikimate. Gln168 is a phosphoenolpyruvate binding site. Asp312 functions as the Proton acceptor in the catalytic mechanism. 2 residues coordinate phosphoenolpyruvate: Arg343 and Arg385.

The protein belongs to the EPSP synthase family. In terms of assembly, monomer.

It localises to the cytoplasm. The enzyme catalyses 3-phosphoshikimate + phosphoenolpyruvate = 5-O-(1-carboxyvinyl)-3-phosphoshikimate + phosphate. Its pathway is metabolic intermediate biosynthesis; chorismate biosynthesis; chorismate from D-erythrose 4-phosphate and phosphoenolpyruvate: step 6/7. Catalyzes the transfer of the enolpyruvyl moiety of phosphoenolpyruvate (PEP) to the 5-hydroxyl of shikimate-3-phosphate (S3P) to produce enolpyruvyl shikimate-3-phosphate and inorganic phosphate. This is 3-phosphoshikimate 1-carboxyvinyltransferase from Enterococcus faecalis (strain ATCC 700802 / V583).